Consider the following 352-residue polypeptide: Photosystem II D2 protein 2 (352 aa).

A helical membrane pass occupies residues 40 to 60; that stretch reads CAYLALGGWLTGTSFVTSWYT. Residue His117 coordinates chlorophyll a. The helical transmembrane segment at 124-140 threads the bilayer; sequence GFMLRQFEIARLVGVRP. 2 residues coordinate pheophytin a: Gln129 and Asn142. Residues 152 to 165 form a helical membrane-spanning segment; that stretch reads VFVSVFLMYPLGQS. His197 contributes to the chlorophyll a binding site. A helical transmembrane segment spans residues 207 to 227; the sequence is GALLCAIHGATVENTLFEDSE. Residues His214 and Phe261 each coordinate a plastoquinone. His214 lines the Fe cation pocket. Residue His268 participates in Fe cation binding. The helical transmembrane segment at 278–294 threads the bilayer; the sequence is GLWMSSIGIVGLALNLR.

The protein belongs to the reaction center PufL/M/PsbA/D family. As to quaternary structure, PSII is composed of 1 copy each of membrane proteins PsbA, PsbB, PsbC, PsbD, PsbE, PsbF, PsbH, PsbI, PsbJ, PsbK, PsbL, PsbM, PsbT, PsbX, PsbY, PsbZ, Psb30/Ycf12, peripheral proteins PsbO, CyanoQ (PsbQ), PsbU, PsbV and a large number of cofactors. It forms dimeric complexes. The D1/D2 heterodimer binds P680, chlorophylls that are the primary electron donor of PSII, and subsequent electron acceptors. It shares a non-heme iron and each subunit binds pheophytin, quinone, additional chlorophylls, carotenoids and lipids. There is also a Cl(-1) ion associated with D1 and D2, which is required for oxygen evolution. The PSII complex binds additional chlorophylls, carotenoids and specific lipids. serves as cofactor.

The protein localises to the cellular thylakoid membrane. The catalysed reaction is 2 a plastoquinone + 4 hnu + 2 H2O = 2 a plastoquinol + O2. Its function is as follows. Photosystem II (PSII) is a light-driven water:plastoquinone oxidoreductase that uses light energy to abstract electrons from H(2)O, generating O(2) and a proton gradient subsequently used for ATP formation. It consists of a core antenna complex that captures photons, and an electron transfer chain that converts photonic excitation into a charge separation. The D1/D2 (PsbA/PsbD) reaction center heterodimer binds P680, the primary electron donor of PSII as well as several subsequent electron acceptors. D2 is needed for assembly of a stable PSII complex. The sequence is that of Photosystem II D2 protein 2 from Synechococcus sp. (strain ATCC 27144 / PCC 6301 / SAUG 1402/1) (Anacystis nidulans).